Consider the following 556-residue polypeptide: Phenylalanine--tRNA ligase beta subunit (556 aa).

The B5 domain maps to 269-345 (MEPEEVVYDV…MGYGYERIEP (77 aa)). Residues Asp-323, Asp-329, Glu-332, and Glu-333 each coordinate Mg(2+).

It belongs to the phenylalanyl-tRNA synthetase beta subunit family. Type 2 subfamily. Tetramer of two alpha and two beta subunits. It depends on Mg(2+) as a cofactor.

It is found in the cytoplasm. It catalyses the reaction tRNA(Phe) + L-phenylalanine + ATP = L-phenylalanyl-tRNA(Phe) + AMP + diphosphate + H(+). The sequence is that of Phenylalanine--tRNA ligase beta subunit from Thermofilum pendens (strain DSM 2475 / Hrk 5).